A 302-amino-acid chain; its full sequence is UDP-N-acetylenolpyruvoylglucosamine reductase (302 aa).

Residues 31–210 (IGGQTKVYFR…ENEVLELKKK (180 aa)) enclose the FAD-binding PCMH-type domain. The active site involves arginine 175. Serine 224 functions as the Proton donor in the catalytic mechanism. Glutamate 297 is an active-site residue.

The protein belongs to the MurB family. It depends on FAD as a cofactor.

It localises to the cytoplasm. The catalysed reaction is UDP-N-acetyl-alpha-D-muramate + NADP(+) = UDP-N-acetyl-3-O-(1-carboxyvinyl)-alpha-D-glucosamine + NADPH + H(+). The protein operates within cell wall biogenesis; peptidoglycan biosynthesis. In terms of biological role, cell wall formation. In Pelagibacter ubique (strain HTCC1062), this protein is UDP-N-acetylenolpyruvoylglucosamine reductase.